The chain runs to 256 residues: Osteocalcin 2 (256 aa).

The first 18 residues, 1–18 (MKTLVLLSICALLSVCWS), serve as a signal peptide directing secretion. A propeptide spanning residues 19 to 209 (MGAVEPEVVV…LASVLLRRRR (191 aa)) is cleaved from the precursor. Positions 38–186 (AAPADPAAAA…SSSSSSSSES (149 aa)) are enriched in low complexity. Residues 38–193 (AAPADPAAAA…SESASDEAAK (156 aa)) are disordered. Residues 218–252 (PLQLESLREVCELNIACDEMAETAGIVAAYVAYYG) form the Gla domain. Glu-222, Glu-226, Glu-229, and Asp-235 together coordinate Ca(2+). 3 positions are modified to 4-carboxyglutamate: Glu-222, Glu-226, and Glu-229. Cys-228 and Cys-234 form a disulfide bridge. The residue at position 236 (Glu-236) is a 4-carboxyglutamate.

Belongs to the osteocalcin/matrix Gla protein family. In terms of processing, gamma-carboxyglutamate residues are formed by vitamin K dependent carboxylation by GGCX. These residues are essential for the binding of calcium.

The protein localises to the secreted. Functionally, the carboxylated form is one of the main organic components of the bone matrix, which constitutes 1-2% of the total bone protein. The carboxylated form binds strongly to apatite and calcium. The protein is Osteocalcin 2 of Diplodus sargus (White seabream).